A 566-amino-acid polypeptide reads, in one-letter code: Putative ABC transporter ATP-binding protein lp_0149 (566 aa).

ABC transporter domains follow at residues 6-247 and 302-536; these read ISFK…GLRE and LAIE…ASLA. ATP is bound by residues 40–47 and 335–342; these read GPSGSGKS and GQNGTGKS.

This sequence belongs to the ABC transporter superfamily.

It localises to the cell membrane. Functionally, probably part of an ABC transporter complex. Responsible for energy coupling to the transport system. This chain is Putative ABC transporter ATP-binding protein lp_0149, found in Lactiplantibacillus plantarum (strain ATCC BAA-793 / NCIMB 8826 / WCFS1) (Lactobacillus plantarum).